A 375-amino-acid polypeptide reads, in one-letter code: Probable neutral protease 2 homolog ARB_05817 (375 aa).

The N-terminal stretch at 1 to 19 (MQVIVALAALGSLAAPALG) is a signal peptide. Positions 20-189 (FSIPRGVPVS…RGPLTRINKR (170 aa)) are excised as a propeptide. 2 cysteine pairs are disulfide-bonded: Cys197/Cys267 and Cys274/Cys292. Residue His317 participates in Zn(2+) binding. Residue Glu318 is part of the active site. The Zn(2+) site is built by His321 and Asp332.

This sequence belongs to the peptidase M35 family. It depends on Zn(2+) as a cofactor.

It is found in the secreted. It catalyses the reaction Preferential cleavage of bonds with hydrophobic residues in P1'. Also 3-Asn-|-Gln-4 and 8-Gly-|-Ser-9 bonds in insulin B chain.. Its function is as follows. Probable secreted metalloprotease that shows high activities on basic nuclear substrates such as histone and protamine. May be involved in virulence. The chain is Probable neutral protease 2 homolog ARB_05817 from Arthroderma benhamiae (strain ATCC MYA-4681 / CBS 112371) (Trichophyton mentagrophytes).